Here is a 287-residue protein sequence, read N- to C-terminus: UPF0354 protein SSP1020 (287 aa).

This sequence belongs to the UPF0354 family.

The polypeptide is UPF0354 protein SSP1020 (Staphylococcus saprophyticus subsp. saprophyticus (strain ATCC 15305 / DSM 20229 / NCIMB 8711 / NCTC 7292 / S-41)).